Reading from the N-terminus, the 365-residue chain is Endophilin-B1 (365 aa).

N-acetylmethionine is present on Met1. Residues 1–30 are membrane-binding amphipathic helix; the sequence is MNIMDFNVKKLAADAGTFLSRAVQFTEEKL. The tract at residues 1–37 is required for membrane binding; that stretch reads MNIMDFNVKKLAADAGTFLSRAVQFTEEKLGQAEKTE. A BAR domain is found at 27 to 261; sequence EEKLGQAEKT…LGSFPSNYLS (235 aa). Thr145 carries the phosphothreonine; by CDK5 modification. The stretch at 155-195 forms a coiled coil; it reads YKTIAKERKLLQNKRLDLDAAKTRLKKAKAAETRNSSEQEL. Residues 305 to 365 form the SH3 domain; sequence SGSRKARVLY…VPITYLELLN (61 aa).

It belongs to the endophilin family. In terms of assembly, homodimer, and heterodimer with SH3GLB2. Binds BAX; induction of apoptosis augments BAX binding. Binds DNM1, HTT, AMPH, BIN1 and ARFGAP1. Interacts with UVRAG; UVRAG bridges the interaction to BECN1 indicative for an association with the PI3K complex II (PI3KC3-C2). Post-translationally, phosphorylated at Thr-145 by CDK5; this phosphorylation is required for autophagy induction in starved neurons and facilitates homodimerization. Highly expressed in heart, skeletal muscle, kidney and placenta. Detected at lower levels in brain, colon, thymus, spleen, liver, small intestine, lung and peripheral blood leukocytes.

The protein resides in the cytoplasm. It localises to the golgi apparatus membrane. It is found in the mitochondrion outer membrane. Its subcellular location is the cytoplasmic vesicle. The protein localises to the autophagosome membrane. The protein resides in the midbody. In terms of biological role, may be required for normal outer mitochondrial membrane dynamics. Required for coatomer-mediated retrograde transport in certain cells. May recruit other proteins to membranes with high curvature. May promote membrane fusion. Involved in activation of caspase-dependent apoptosis by promoting BAX/BAK1 activation. Isoform 1 acts proapoptotic in fibroblasts. Involved in caspase-independent apoptosis during nutrition starvation and involved in the regulation of autophagy. Activates lipid kinase activity of PIK3C3 during autophagy probably by associating with the PI3K complex II (PI3KC3-C2). Associated with PI3KC3-C2 during autophagy may regulate the trafficking of ATG9A from the Golgi complex to the peripheral cytoplasm for the formation of autophagosomes by inducing Golgi membrane tubulation and fragmentation. Involved in regulation of degradative endocytic trafficking and cytokinesis, probably in the context of PI3KC3-C2. Isoform 2 acts antiapoptotic in neuronal cells; involved in maintenance of mitochondrial morphology and promotes neuronal viability. This is Endophilin-B1 (SH3GLB1) from Homo sapiens (Human).